The sequence spans 264 residues: S-adenosylmethionine decarboxylase proenzyme (264 aa).

Catalysis depends on Ser-112, which acts as the Schiff-base intermediate with substrate; via pyruvic acid. Ser-112 is subject to Pyruvic acid (Ser); by autocatalysis. The active-site Proton acceptor; for processing activity is the His-117. Catalysis depends on Cys-140, which acts as the Proton donor; for catalytic activity.

This sequence belongs to the prokaryotic AdoMetDC family. Type 2 subfamily. As to quaternary structure, heterooctamer of four alpha and four beta chains arranged as a tetramer of alpha/beta heterodimers. It depends on pyruvate as a cofactor. In terms of processing, is synthesized initially as an inactive proenzyme. Formation of the active enzyme involves a self-maturation process in which the active site pyruvoyl group is generated from an internal serine residue via an autocatalytic post-translational modification. Two non-identical subunits are generated from the proenzyme in this reaction, and the pyruvate is formed at the N-terminus of the alpha chain, which is derived from the carboxyl end of the proenzyme. The post-translation cleavage follows an unusual pathway, termed non-hydrolytic serinolysis, in which the side chain hydroxyl group of the serine supplies its oxygen atom to form the C-terminus of the beta chain, while the remainder of the serine residue undergoes an oxidative deamination to produce ammonia and the pyruvoyl group blocking the N-terminus of the alpha chain.

The enzyme catalyses S-adenosyl-L-methionine + H(+) = S-adenosyl 3-(methylsulfanyl)propylamine + CO2. It functions in the pathway amine and polyamine biosynthesis; S-adenosylmethioninamine biosynthesis; S-adenosylmethioninamine from S-adenosyl-L-methionine: step 1/1. In terms of biological role, catalyzes the decarboxylation of S-adenosylmethionine to S-adenosylmethioninamine (dcAdoMet), the propylamine donor required for the synthesis of the polyamines spermine and spermidine from the diamine putrescine. The polypeptide is S-adenosylmethionine decarboxylase proenzyme (Cronobacter sakazakii (strain ATCC BAA-894) (Enterobacter sakazakii)).